Consider the following 478-residue polypeptide: Islet cell autoantigen 1 (478 aa).

The region spanning 50–253 is the AH domain; sequence ASDADLDAKL…TSHTMAAIHE (204 aa). A compositionally biased stretch (basic and acidic residues) spans 306–317; it reads EHKDSSAYKTEE. 2 disordered regions span residues 306 to 365 and 398 to 422; these read EHKD…SGDK and LKEPAPMGAQGEPDPKPQIGSGFLP.

As to expression, predominantly expressed in brain, pancreas and stomach mucosa. High expression also found in stomach muscle and testis.

It is found in the cytoplasm. The protein localises to the cytosol. Its subcellular location is the golgi apparatus membrane. It localises to the cytoplasmic vesicle. The protein resides in the secretory vesicle membrane. It is found in the secretory vesicle. The protein localises to the synaptic vesicle membrane. Functionally, may play a role in neurotransmitter secretion. The sequence is that of Islet cell autoantigen 1 from Mus musculus (Mouse).